A 635-amino-acid polypeptide reads, in one-letter code: Threonine--tRNA ligase (635 aa).

The region spanning Met-1–Thr-61 is the TGS domain. The segment at Asp-242 to Pro-533 is catalytic. 3 residues coordinate Zn(2+): Cys-333, His-384, and His-510.

It belongs to the class-II aminoacyl-tRNA synthetase family. In terms of assembly, homodimer. Zn(2+) is required as a cofactor.

It localises to the cytoplasm. The catalysed reaction is tRNA(Thr) + L-threonine + ATP = L-threonyl-tRNA(Thr) + AMP + diphosphate + H(+). Functionally, catalyzes the attachment of threonine to tRNA(Thr) in a two-step reaction: L-threonine is first activated by ATP to form Thr-AMP and then transferred to the acceptor end of tRNA(Thr). Also edits incorrectly charged L-seryl-tRNA(Thr). This chain is Threonine--tRNA ligase, found in Rickettsia bellii (strain RML369-C).